The sequence spans 367 residues: Small ribosomal subunit biogenesis GTPase RsgA (367 aa).

Positions 112 to 267 (AEQVLATNVD…VIDTPGLREL (156 aa)) constitute a CP-type G domain. GTP-binding positions include 157–160 (NKSD) and 209–217 (GSSGAGKST). C291, C296, H298, and C304 together coordinate Zn(2+).

This sequence belongs to the TRAFAC class YlqF/YawG GTPase family. RsgA subfamily. Monomer. Associates with 30S ribosomal subunit, binds 16S rRNA. The cofactor is Zn(2+).

It localises to the cytoplasm. Its function is as follows. One of several proteins that assist in the late maturation steps of the functional core of the 30S ribosomal subunit. Helps release RbfA from mature subunits. May play a role in the assembly of ribosomal proteins into the subunit. Circularly permuted GTPase that catalyzes slow GTP hydrolysis, GTPase activity is stimulated by the 30S ribosomal subunit. The polypeptide is Small ribosomal subunit biogenesis GTPase RsgA (Opitutus terrae (strain DSM 11246 / JCM 15787 / PB90-1)).